Reading from the N-terminus, the 143-residue chain is Small ribosomal subunit protein uS12 (143 aa).

P62 carries the post-translational modification Hydroxyproline.

The protein belongs to the universal ribosomal protein uS12 family.

The chain is Small ribosomal subunit protein uS12 (rps23) from Dictyostelium discoideum (Social amoeba).